We begin with the raw amino-acid sequence, 223 residues long: MSQVSPTRMNLLQRRGQLRLAQKGVDLLKKKRDALVAEFFGLVREAMEARKALDQAAKEAYAALLLAQAFDGPEVVAGAALGVPPLEGVEAEVENVWGSKVPRLKATFPDGALLSPVGTPAYTLEASRAFRRYAEALIRVANTETRLKKIGEEIKKTTRRVNALEQVVIPGIRAQIRFIQQVLEQREREDTFRLKRIKGKIEAREAEEEGGRPNPQVEIGAGL.

Residues 203 to 223 (AREAEEEGGRPNPQVEIGAGL) form a disordered region.

This sequence belongs to the V-ATPase D subunit family.

Functionally, produces ATP from ADP in the presence of a proton gradient across the membrane. The sequence is that of V-type ATP synthase subunit D from Thermus thermophilus (strain ATCC BAA-163 / DSM 7039 / HB27).